Here is a 340-residue protein sequence, read N- to C-terminus: Phospho-N-acetylmuramoyl-pentapeptide-transferase (340 aa).

The next 10 membrane-spanning stretches (helical) occupy residues 3-23 (MSLI…PHFI), 53-73 (GGTV…FHVF), 79-99 (AYGA…IGFL), 119-139 (MALQ…PSGT), 144-164 (IGGL…FWIV), 176-196 (IDGL…IIAF), 200-220 (ELAI…FFVF), 227-247 (VFMG…ISIA), 250-270 (VEWT…SVML), and 315-335 (VDAF…WMVL).

The protein belongs to the glycosyltransferase 4 family. MraY subfamily. It depends on Mg(2+) as a cofactor.

The protein localises to the cell membrane. It carries out the reaction UDP-N-acetyl-alpha-D-muramoyl-L-alanyl-gamma-D-glutamyl-L-lysyl-D-alanyl-D-alanine + di-trans,octa-cis-undecaprenyl phosphate = Mur2Ac(oyl-L-Ala-gamma-D-Glu-L-Lys-D-Ala-D-Ala)-di-trans,octa-cis-undecaprenyl diphosphate + UMP. It participates in cell wall biogenesis; peptidoglycan biosynthesis. In terms of biological role, catalyzes the initial step of the lipid cycle reactions in the biosynthesis of the cell wall peptidoglycan: transfers peptidoglycan precursor phospho-MurNAc-pentapeptide from UDP-MurNAc-pentapeptide onto the lipid carrier undecaprenyl phosphate, yielding undecaprenyl-pyrophosphoryl-MurNAc-pentapeptide, known as lipid I. The sequence is that of Phospho-N-acetylmuramoyl-pentapeptide-transferase from Streptococcus thermophilus (strain CNRZ 1066).